The chain runs to 332 residues: 2,3-diketo-L-gulonate reductase (332 aa).

Histidine 44 functions as the Proton donor in the catalytic mechanism. Residues 168 to 174 (ITMVDMS), 224 to 225 (WK), and 304 to 306 (GHE) contribute to the NAD(+) site.

The protein belongs to the LDH2/MDH2 oxidoreductase family. DlgD subfamily. As to quaternary structure, homodimer.

It is found in the cytoplasm. The enzyme catalyses 3-dehydro-L-gulonate + NAD(+) = 2,3-dioxo-L-gulonate + NADH + H(+). It carries out the reaction 3-dehydro-L-gulonate + NADP(+) = 2,3-dioxo-L-gulonate + NADPH + H(+). Functionally, catalyzes the reduction of 2,3-diketo-L-gulonate in the presence of NADH, to form 3-keto-L-gulonate. In Salmonella typhimurium (strain LT2 / SGSC1412 / ATCC 700720), this protein is 2,3-diketo-L-gulonate reductase.